Here is a 269-residue protein sequence, read N- to C-terminus: Small ribosomal subunit protein uS2 (269 aa).

It belongs to the universal ribosomal protein uS2 family.

The polypeptide is Small ribosomal subunit protein uS2 (rpsB) (Synechocystis sp. (strain ATCC 27184 / PCC 6803 / Kazusa)).